We begin with the raw amino-acid sequence, 468 residues long: Interleukin-6 receptor subunit alpha (468 aa).

The signal sequence occupies residues 1–19 (MLAVGCALLAALLAAPGAA). Topologically, residues 20-365 (LAPRRCPAQE…VQDSSSVPLP (346 aa)) are extracellular. 4 disulfides stabilise this stretch: cysteine 25–cysteine 193, cysteine 47–cysteine 96, cysteine 121–cysteine 132, and cysteine 165–cysteine 176. One can recognise an Ig-like C2-type domain in the interval 26 to 112 (PAQEVARGVL…AGTVHLLVDV (87 aa)). N-linked (GlcNAc...) asparagine glycosylation is found at asparagine 55 and asparagine 93. 2 Fibronectin type-III domains span residues 113–217 (PPEE…LQPD) and 218–316 (PPAN…TPWT). N-linked (GlcNAc...) asparagine glycans are attached at residues asparagine 221 and asparagine 245. Positions 303–307 (WSEWS) match the WSXWS motif motif. The segment at 303–328 (WSEWSPEAMGTPWTESRSPPAENEVS) is disordered. A glycan (N-linked (GlcNAc...) asparagine) is linked at asparagine 350. A glycan (O-linked (GlcNAc) threonine) is linked at threonine 352. The chain crosses the membrane as a helical span at residues 366 to 386 (TFLVAGGSLAFGTLLCIAIVL). At 387–468 (RFKKTWKLRA…ISNTDYFFPR (82 aa)) the chain is on the cytoplasmic side. A compositionally biased stretch (pro residues) spans 421-433 (TPVLVPLISPPVS). Positions 421-468 (TPVLVPLISPPVSPSSLGSDNTSSHNRPDARDPRSPYDISNTDYFFPR) are disordered. The span at 446-455 (NRPDARDPRS) shows a compositional bias: basic and acidic residues. Over residues 458–468 (DISNTDYFFPR) the composition is skewed to polar residues.

It belongs to the type I cytokine receptor family. Type 3 subfamily. In terms of assembly, component of a hexamer of two molecules each of IL6, IL6R and IL6ST; first binds to IL6 to associate with the signaling subunit IL6ST. Interacts (via N-terminal ectodomain) with SORL1; this interaction may affect IL6-binding to IL6R, hence decrease IL6 'classic-signaling'. Also interacts with SORL1; this interaction leads to soluble IL6R internalization. May form a trimeric complex with the soluble SORL1 ectodomain and circulating IL6 receptor; this interaction might stabilize circulating IL6, hence promote IL6 'trans-signaling,. A short soluble form is released from the membrane by proteolysis. The sIL6R is formed mostly by limited proteolysis of membrane-bound receptors, a process referred to as ectodomain shedding, but is also directly secreted from the cells after alternative mRNA splicing. mIL6R is cleaved by the proteases ADAM10 and ADAM17. In terms of processing, glycosylated. Glycosylation is dispensable for transport, signaling, and cell-surface turnover. Glycosylation at Asn-55 is a protease-regulatory exosite. Glycosylation is required for ADAM17-mediated proteolysis. Expressed in peripheral blood mononuclear cells and weakly found in urine and serum. 1%-20% of the total sIL6R in plasma is generated by alternative splicing.

Its subcellular location is the cell membrane. It is found in the secreted. With respect to regulation, classic and trans-signaling are both inhibited by tocilizumab, a humanized monoclonal antibody that blocks interleukin IL6R signaling. Its function is as follows. Part of the receptor for interleukin 6. Binds to IL6 with low affinity, but does not transduce a signal. Signal activation necessitate an association with IL6ST. Activation leads to the regulation of the immune response, acute-phase reactions and hematopoiesis. The interaction with membrane-bound IL6R and IL6ST stimulates 'classic signaling', the restricted expression of the IL6R limits classic IL6 signaling to only a few tissues such as the liver and some cells of the immune system. Whereas the binding of IL6 and soluble IL6R to IL6ST stimulates 'trans-signaling'. Alternatively, 'cluster signaling' occurs when membrane-bound IL6:IL6R complexes on transmitter cells activate IL6ST receptors on neighboring receiver cells. In terms of biological role, signaling via the membrane-bound IL6R is mostly regenerative and anti-inflammatory. Drives naive CD4(+) T cells to the Th17 lineage, through 'cluster signaling' by dendritic cells. Functionally, soluble form of IL6 receptor (sIL6R) that acts as an agonist of IL6 activity. The IL6:sIL6R complex (hyper-IL6) binds to IL6ST/gp130 on cell surfaces and induces signaling also on cells that do not express membrane-bound IL6R in a process called IL6 'trans-signaling'. sIL6R is causative for the pro-inflammatory properties of IL6 and an important player in the development of chronic inflammatory diseases. In complex with IL6, is required for induction of VEGF production. Plays a protective role during liver injury, being required for maintenance of tissue regeneration. 'Trans-signaling' in central nervous system regulates energy and glucose homeostasis. This Homo sapiens (Human) protein is Interleukin-6 receptor subunit alpha.